The sequence spans 452 residues: Exodeoxyribonuclease 7 large subunit (452 aa).

Belongs to the XseA family. Heterooligomer composed of large and small subunits.

The protein resides in the cytoplasm. It catalyses the reaction Exonucleolytic cleavage in either 5'- to 3'- or 3'- to 5'-direction to yield nucleoside 5'-phosphates.. Bidirectionally degrades single-stranded DNA into large acid-insoluble oligonucleotides, which are then degraded further into small acid-soluble oligonucleotides. The sequence is that of Exodeoxyribonuclease 7 large subunit from Bordetella avium (strain 197N).